The primary structure comprises 474 residues: Photosystem II CP43 reaction center protein (474 aa).

The propeptide occupies 1-14 (MKTLYSLRRFYPVE). An N-acetylthreonine modification is found at T15. T15 bears the Phosphothreonine mark. The next 5 membrane-spanning stretches (helical) occupy residues 69 to 93 (LFEV…PHLA), 134 to 155 (LLGP…KDRN), 178 to 201 (KALY…RKIT), 256 to 276 (KPFA…LSYS), and 292 to 313 (WFNN…ASQA). E368 is a binding site for [CaMn4O5] cluster. A helical transmembrane segment spans residues 448-472 (RARAAAAGFEKGIDRDFEPVLSMTP).

The protein belongs to the PsbB/PsbC family. PsbC subfamily. In terms of assembly, PSII is composed of 1 copy each of membrane proteins PsbA, PsbB, PsbC, PsbD, PsbE, PsbF, PsbH, PsbI, PsbJ, PsbK, PsbL, PsbM, PsbT, PsbX, PsbY, PsbZ, Psb30/Ycf12, at least 3 peripheral proteins of the oxygen-evolving complex and a large number of cofactors. It forms dimeric complexes. Binds multiple chlorophylls and provides some of the ligands for the Ca-4Mn-5O cluster of the oxygen-evolving complex. It may also provide a ligand for a Cl- that is required for oxygen evolution. PSII binds additional chlorophylls, carotenoids and specific lipids. is required as a cofactor.

It is found in the plastid. Its subcellular location is the chloroplast thylakoid membrane. Functionally, one of the components of the core complex of photosystem II (PSII). It binds chlorophyll and helps catalyze the primary light-induced photochemical processes of PSII. PSII is a light-driven water:plastoquinone oxidoreductase, using light energy to abstract electrons from H(2)O, generating O(2) and a proton gradient subsequently used for ATP formation. In Citrus sinensis (Sweet orange), this protein is Photosystem II CP43 reaction center protein.